We begin with the raw amino-acid sequence, 442 residues long: MQRYISLSVSLSLLSGANALVRPDGVGRLPALGWNTWNAFGCDIDASKVLTAAEETINLGLKDAGYEYINIDDCWSVKSGRDPNTKRIIPDSAKFPDGISGVASKIHDLGLKVGIYSSAGTETCAGYPASLGYEKIDAESFAEWGIDYLKYDNCGVPTNWTDTYTHCVPDNSNGSKFPNGTCPDISNPAPTAYDWSSSNTAQRYNAMRDALLGVNRTILYSLCEWGQADVNTWGNGTGNSWRTTGDITPDWSRIVEIANENSFLMNYADFWGYPDPDMLEVGNGNLTLEENRAHFALWAAMKSPLIIGTALDSINEEHLAILKNKPLLSFHQDPVIGRPAYPYKWGYNPDWTFDPAHPAEYWSGPSSTLGGTLVLMFNSEDSAKHRTAVWSEIPELKDSAEKGSGYRVTEIWTGEDLGCVKDQYDVELQSHDIAALVVGESC.

The first 19 residues, 1-19 (MQRYISLSVSLSLLSGANA), serve as a signal peptide directing secretion. Disulfide bonds link Cys42–Cys74 and Cys124–Cys154. Catalysis depends on Asp152, which acts as the Nucleophile. N-linked (GlcNAc...) asparagine glycans are attached at residues Asn159, Asn173, Asn179, and Asn215. 224–228 (EWGQA) lines the substrate pocket. A glycan (N-linked (GlcNAc...) asparagine) is linked at Asn235. Catalysis depends on Asp246, which acts as the Proton donor. The N-linked (GlcNAc...) asparagine glycan is linked to Asn285.

Belongs to the glycosyl hydrolase 27 family.

It is found in the secreted. The enzyme catalyses Hydrolysis of terminal, non-reducing alpha-D-galactose residues in alpha-D-galactosides, including galactose oligosaccharides, galactomannans and galactolipids.. Functionally, hydrolyzes a variety of simple alpha-D-galactoside as well as more complex molecules such as oligosaccharides and polysaccharides. The sequence is that of Probable alpha-galactosidase B (aglB) from Aspergillus oryzae (strain ATCC 42149 / RIB 40) (Yellow koji mold).